The sequence spans 207 residues: Protein lin-7 homolog B (207 aa).

The Kinase interacting site signature appears at 1 to 13; the sequence is MAALVEPLGLERD. Residues 10 to 65 enclose the L27 domain; sequence LERDVSRAVELLERLQRSGELPPQKLQALQRVLQSRFCSAIREVYEQLYDTLDITG. In terms of domain architecture, PDZ spans 93–175; sequence VVELPKTDEG…SVKLVVRYTP (83 aa). The tract at residues 187 to 207 is disordered; sequence KMRSARRRQQHHSYSSLESRG. The segment covering 198–207 has biased composition (polar residues); the sequence is HSYSSLESRG.

The protein belongs to the lin-7 family. Forms two exclusive ternary complexes with CASK and CASKIN1. The brain-specific heterotrimeric complex (LIN-10-LIN-2-LIN-7 complex) composed of at least APBA1, CASK, and LIN7, associates with the motor protein KIF17 to transport vesicles along microtubules. Forms a heterotrimeric complex composed of MMP5, LIN7B and PATJ; the N-terminal L27 domain of PALS1 interacts with the L27 domain of PATJ and the C-terminal L27 domain of PALS1 interacts with the L27 domain of LIN7B. Forms a heterotrimeric complex with DLG1 and CASK via their L27 domains. Interacts with DLG4 and GRIN2B as well as CDH1 and CTNNB1, the channels KCNJ12/Kir2.2, KCNJ4/Kir2.3 and probably KCNJ2/Kir2.1 and SLC6A12/BGT-1 via its PDZ domain. The association of LIN7A with cadherin and beta-catenin is calcium-dependent, occurs at synaptic junctions and requires the actin cytoskeleton. Interacts with EGFR, ERBB2, ERBB3 and ERBB4 with both PDZ and KID domains. Associates with KIF17 via APBA1. Interacts with ASIC3. Interacts with TOPK. Interacts with RTKN. Interacts with APBA1. Interacts with MPP7. Interacts with DLG2. Interacts with DLG3. As to expression, expressed only in brain.

It localises to the cell membrane. The protein resides in the basolateral cell membrane. Its subcellular location is the cell junction. The protein localises to the postsynaptic density membrane. It is found in the tight junction. Plays a role in establishing and maintaining the asymmetric distribution of channels and receptors at the plasma membrane of polarized cells. Forms membrane-associated multiprotein complexes that may regulate delivery and recycling of proteins to the correct membrane domains. The tripartite complex composed of LIN7 (LIN7A, LIN7B or LIN7C), CASK and APBA1 associates with the motor protein KIF17 to transport vesicles containing N-methyl-D-aspartate (NMDA) receptor subunit NR2B along microtubules. This complex may have the potential to couple synaptic vesicle exocytosis to cell adhesion in brain. Ensures the proper localization of GRIN2B (subunit 2B of the NMDA receptor) to neuronal postsynaptic density and may function in localizing synaptic vesicles at synapses where it is recruited by beta-catenin and cadherin. Required to localize Kir2 channels, GABA transporter (SLC6A12) and EGFR/ERBB1, ERBB2, ERBB3 and ERBB4 to the basolateral membrane of epithelial cells. May increase the amplitude of ASIC3 acid-evoked currents by stabilizing the channel at the cell surface. The chain is Protein lin-7 homolog B (Lin7b) from Rattus norvegicus (Rat).